A 2156-amino-acid chain; its full sequence is MAM and LDL-receptor class A domain-containing protein 1 (2156 aa).

The signal sequence occupies residues Met-1–Ala-31. Residues Gln-32 to Thr-2076 lie on the Vesicular side of the membrane. In terms of domain architecture, LDL-receptor class A 1 spans Gln-33–Leu-68. 2 disulfides stabilise this stretch: Cys-40/Cys-58 and Cys-52/Cys-67. MAM domains are found at residues Glu-71 to Pro-229 and Gln-268 to Gln-427. Residues Leu-433–Ser-471 form the LDL-receptor class A 2 domain. Disulfide bonds link Cys-434–Cys-446, Cys-441–Cys-459, and Cys-453–Cys-470. MAM domains follow at residues Leu-474 to Ile-637 and Ser-652 to Leu-816. The N-linked (GlcNAc...) asparagine glycan is linked to Asn-813. In terms of domain architecture, LDL-receptor class A 3 spans Ser-822–Ala-860. 3 disulfides stabilise this stretch: Cys-823-Cys-837, Cys-831-Cys-850, and Cys-844-Cys-859. The MAM 5 domain maps to Leu-863–Leu-1024. A glycan (N-linked (GlcNAc...) asparagine) is linked at Asn-1049. The region spanning Asn-1049–Val-1086 is the LDL-receptor class A 4 domain. 3 cysteine pairs are disulfide-bonded: Cys-1050–Cys-1063, Cys-1057–Cys-1076, and Cys-1070–Cys-1085. Residues Glu-1088–Pro-1256 enclose the MAM 6 domain. Residue Asn-1199 is glycosylated (N-linked (GlcNAc...) asparagine). Residues Lys-1263–Arg-1301 enclose the LDL-receptor class A 5 domain. Disulfide bonds link Cys-1264–Cys-1276, Cys-1271–Cys-1289, and Cys-1283–Cys-1300. In terms of domain architecture, MAM 7 spans Gly-1305–Ser-1465. An N-linked (GlcNAc...) asparagine glycan is attached at Asn-1414. One can recognise an LDL-receptor class A 6 domain in the interval Phe-1482–Gly-1518. Cystine bridges form between Cys-1483–Cys-1495, Cys-1490–Cys-1508, and Cys-1502–Cys-1517. An MAM 8 domain is found at Ser-1519–Thr-1676. An LDL-receptor class A 7 domain is found at Leu-1683–Ala-1720. 3 disulfides stabilise this stretch: Cys-1684/Cys-1697, Cys-1692/Cys-1710, and Cys-1704/Cys-1719. Residues Gly-1727–Thr-1892 form the MAM 9 domain. 3 LDL-receptor class A domains span residues Pro-1902–Pro-1939, Leu-1946–Ser-1982, and Ser-1985–Ser-2023. 12 cysteine pairs are disulfide-bonded: Cys-1903/Cys-1916, Cys-1910/Cys-1929, Cys-1923/Cys-1938, Cys-1947/Cys-1959, Cys-1954/Cys-1972, Cys-1966/Cys-1981, Cys-1986/Cys-1999, Cys-1993/Cys-2012, Cys-2006/Cys-2022, Cys-2025/Cys-2036, Cys-2030/Cys-2045, and Cys-2047/Cys-2056. Residues Glu-2024 to His-2057 enclose the EGF-like domain. The chain crosses the membrane as a helical span at residues Leu-2077–Leu-2097. Topologically, residues Ala-2098–Lys-2156 are cytoplasmic.

As to quaternary structure, interacts with FGF19. As to expression, strongly expressed in the small intestine.

Its subcellular location is the cytoplasmic vesicle membrane. In terms of biological role, enhances production and/or transport of FGF19 and thus has a role in regulation of bile acid synthesis. This is MAM and LDL-receptor class A domain-containing protein 1 from Homo sapiens (Human).